The chain runs to 498 residues: DNA-directed RNA polymerase subunit Rpo2N (498 aa).

It belongs to the RNA polymerase beta chain family. In terms of assembly, part of the RNA polymerase complex.

The protein localises to the cytoplasm. It catalyses the reaction RNA(n) + a ribonucleoside 5'-triphosphate = RNA(n+1) + diphosphate. Its function is as follows. DNA-dependent RNA polymerase (RNAP) catalyzes the transcription of DNA into RNA using the four ribonucleoside triphosphates as substrates. The Rpo2 subunit (Rpo2N and Rpo2C in this organism) is implicated in DNA promoter recognition and in nucleotide binding. The chain is DNA-directed RNA polymerase subunit Rpo2N from Methanocaldococcus jannaschii (strain ATCC 43067 / DSM 2661 / JAL-1 / JCM 10045 / NBRC 100440) (Methanococcus jannaschii).